Consider the following 66-residue polypeptide: MNTGFFFFVIMATGLVLTFDTIHAEDKLKCTKTDDCAKYCSQFTDVHPACLGGYCECLRWEGGISS.

A signal peptide spans 1 to 24 (MNTGFFFFVIMATGLVLTFDTIHA). Disulfide bonds link C30–C50, C36–C55, and C40–C57.

Belongs to the short scorpion toxin superfamily. Potassium channel inhibitor family. Alpha-KTx 30 subfamily. In terms of tissue distribution, expressed by the venom gland.

The protein localises to the secreted. Inhibits Kv1.3/KCNA3 channel (1 uM of the toxin inhibits currents by 64.1%). In Scorpiops margerisonae (Scorpion), this protein is Potassium channel toxin alpha-KTx 30.1.